A 435-amino-acid chain; its full sequence is Cysteine--tRNA ligase (435 aa).

C24 contributes to the Zn(2+) binding site. Residues 26-36 carry the 'HIGH' region motif; the sequence is PTVYDHIHIGN. Zn(2+)-binding residues include C202, H228, and E232. Residues 260-264 carry the 'KMSKS' region motif; sequence KMSKS. ATP is bound at residue K263.

It belongs to the class-I aminoacyl-tRNA synthetase family. As to quaternary structure, monomer. Zn(2+) is required as a cofactor.

It localises to the cytoplasm. The catalysed reaction is tRNA(Cys) + L-cysteine + ATP = L-cysteinyl-tRNA(Cys) + AMP + diphosphate. The chain is Cysteine--tRNA ligase from Mycoplasmoides gallisepticum (strain R(low / passage 15 / clone 2)) (Mycoplasma gallisepticum).